The sequence spans 397 residues: MTKEKLILAYSGGLDTSVAIAWLKKDYDVIAVCMDVGEGKNLEFIHDKALSIGAIESHVLDVKEEFAQEYVLPALQAHAYYEQKYPLVSALSRPLISKKLVEMAHKTGATTIAHGCTGKGNDQVRFEVAIAALDPSLKVVAPVREWKWAREEEIIFAKENGVPVPADLDSPYSVDQNLWGRANECGVLENPWNEAPEDTFGITTSPENAPDTPEYVDIEFKAGIPVAVNGEKLSLANLIQRLNVIAGKHGVGRIDHVENRLVGIKSREIYECPGAITLLTAHKEIEDLTLVREVSHFKPIVSNELSNLIYNGLWFNPATDALKAYLAQTQAVVNGTAKVKLYKGSAKVVARKSPNSLYDEDLATYTSADTFDQDAAVGFIKLWGLPTKVNAEIHKKS.

Position 9-17 (9-17 (AYSGGLDTS)) interacts with ATP. Residue tyrosine 85 coordinates L-citrulline. Glycine 115 contributes to the ATP binding site. Threonine 117, asparagine 121, and aspartate 122 together coordinate L-aspartate. Asparagine 121 is an L-citrulline binding site. Residues arginine 125, serine 173, glutamate 258, and tyrosine 270 each contribute to the L-citrulline site.

Belongs to the argininosuccinate synthase family. Type 1 subfamily. As to quaternary structure, homotetramer.

It is found in the cytoplasm. The enzyme catalyses L-citrulline + L-aspartate + ATP = 2-(N(omega)-L-arginino)succinate + AMP + diphosphate + H(+). The protein operates within amino-acid biosynthesis; L-arginine biosynthesis; L-arginine from L-ornithine and carbamoyl phosphate: step 2/3. In Streptococcus suis (strain 05ZYH33), this protein is Argininosuccinate synthase.